A 186-amino-acid chain; its full sequence is Shikimate kinase (186 aa).

Residue 15–20 (GAGKTT) coordinates ATP. A Mg(2+)-binding site is contributed by Thr-19. Residues Asp-37, Arg-61, and Gly-83 each contribute to the substrate site. Arg-121 is an ATP binding site. Residue Arg-140 coordinates substrate.

Belongs to the shikimate kinase family. In terms of assembly, monomer. Mg(2+) serves as cofactor.

It localises to the cytoplasm. It carries out the reaction shikimate + ATP = 3-phosphoshikimate + ADP + H(+). It participates in metabolic intermediate biosynthesis; chorismate biosynthesis; chorismate from D-erythrose 4-phosphate and phosphoenolpyruvate: step 5/7. Catalyzes the specific phosphorylation of the 3-hydroxyl group of shikimic acid using ATP as a cosubstrate. This is Shikimate kinase from Psychrobacter cryohalolentis (strain ATCC BAA-1226 / DSM 17306 / VKM B-2378 / K5).